The sequence spans 417 residues: Serine hydroxymethyltransferase (417 aa).

(6S)-5,6,7,8-tetrahydrofolate-binding positions include Leu-121 and 125–127 (GHL). An N6-(pyridoxal phosphate)lysine modification is found at Lys-229. 355–357 (SPF) provides a ligand contact to (6S)-5,6,7,8-tetrahydrofolate.

The protein belongs to the SHMT family. As to quaternary structure, homodimer. It depends on pyridoxal 5'-phosphate as a cofactor.

Its subcellular location is the cytoplasm. The catalysed reaction is (6R)-5,10-methylene-5,6,7,8-tetrahydrofolate + glycine + H2O = (6S)-5,6,7,8-tetrahydrofolate + L-serine. It participates in one-carbon metabolism; tetrahydrofolate interconversion. Its pathway is amino-acid biosynthesis; glycine biosynthesis; glycine from L-serine: step 1/1. In terms of biological role, catalyzes the reversible interconversion of serine and glycine with tetrahydrofolate (THF) serving as the one-carbon carrier. This reaction serves as the major source of one-carbon groups required for the biosynthesis of purines, thymidylate, methionine, and other important biomolecules. Also exhibits THF-independent aldolase activity toward beta-hydroxyamino acids, producing glycine and aldehydes, via a retro-aldol mechanism. The sequence is that of Serine hydroxymethyltransferase from Stenotrophomonas maltophilia (strain R551-3).